The primary structure comprises 896 residues: MKTQDIAQRWLDFFAAKGHTVVPSASLISADPSILFNIAGMVPFVPYLSGREKAPYDRATSVQKCIRTADIDEVGKTVRHGTFFQMCGNFSFGDYFKEGAITFAWELLTSSIADGGYGLDPSRLWATVYVDGTEKDEEARAIWRDKIGIPEERIQGTGKADNFWSTGQPGPGGPCSEIYYDLGAKYGQEGGPIVDETRYIEIWNLVFMQYQLSAVRSKTDFDIAGDLPNRNIDTGLGLERLAMILQGVENLYETDQVRPVLDAAAELAGKDYTSTVDPADPHHADDVRLRVVADHIRSALMLIADGVAPSNEGRGYVLRRLIRRAVRAMRLMGVEKPCLPALLPVSREAMKGFYPAVEEDFERISRIAYAEEKSFLRTIASGTARLDEAVTESKAKNQPLSGAEAFALHDTYGFPIDLTLEMAAEAGLAVDETGFRALMLEQRQRAQADSREKKSGHADLSAFNELLAQGQTVFTGYSELDGESAIRGLLSGGQPIAKASQGQEIELVLAETPFYAEAGGQAADTGLISGDGFVIEVLDVQRPVKDLSVHKAIVREGEVAIGASVRAAVDRERRHAAEQAHTGTHIVHAALHQILGPEALQRGSFNKAGYLRFDFAWGEGLSTATRSEIEEVANIAIRNNYSVQTTEMPIDEAKALGAMALFGENYGSRVRVVEIDGAWSRELCGGTHVDTTSRIGSLTLLGEQSVGYGNRRVEAFVGMDAFRHLAAERALVSELTEIMKVPSTQLADRIGATLAKLRATEKELDRLRKAQLTAAAGELTTKAQQVGKTRLLTHDVGQIGGADELRSLALDLRERLGSEAAVVALTGESNDRPMVLVATNEAARAAGVKAGALVKLAAGVLGGGGGGKDDVAQGGGSNVGQIPAALAAINQAVAAL.

Zn(2+)-binding residues include H581, H585, C684, and H688.

Belongs to the class-II aminoacyl-tRNA synthetase family. Requires Zn(2+) as cofactor.

It is found in the cytoplasm. The enzyme catalyses tRNA(Ala) + L-alanine + ATP = L-alanyl-tRNA(Ala) + AMP + diphosphate. Catalyzes the attachment of alanine to tRNA(Ala) in a two-step reaction: alanine is first activated by ATP to form Ala-AMP and then transferred to the acceptor end of tRNA(Ala). Also edits incorrectly charged Ser-tRNA(Ala) and Gly-tRNA(Ala) via its editing domain. This Renibacterium salmoninarum (strain ATCC 33209 / DSM 20767 / JCM 11484 / NBRC 15589 / NCIMB 2235) protein is Alanine--tRNA ligase.